The primary structure comprises 83 residues: Toxin To12 (83 aa).

The N-terminal stretch at 1–19 is a signal peptide; that stretch reads MKGLILFICGFMMIGVILA. In terms of domain architecture, LCN-type CS-alpha/beta spans 20–82; it reads KEGYPMDHEG…VWDYYNNKCG (63 aa). 4 disulfide bridges follow: cysteine 30/cysteine 81, cysteine 34/cysteine 57, cysteine 42/cysteine 62, and cysteine 46/cysteine 64. A Cysteine amide modification is found at cysteine 81.

It belongs to the long (4 C-C) scorpion toxin superfamily. Sodium channel inhibitor family. Beta subfamily. Expressed by the venom gland.

It is found in the secreted. Beta toxins bind voltage-independently at site-4 of sodium channels (Nav) and shift the voltage of activation toward more negative potentials thereby affecting sodium channel activation and promoting spontaneous and repetitive firing. This is Toxin To12 from Tityus obscurus (Amazonian scorpion).